The following is a 243-amino-acid chain: 1-(5-phosphoribosyl)-5-[(5-phosphoribosylamino)methylideneamino] imidazole-4-carboxamide isomerase (243 aa).

Catalysis depends on D10, which acts as the Proton acceptor. D131 serves as the catalytic Proton donor.

This sequence belongs to the HisA/HisF family.

Its subcellular location is the cytoplasm. It carries out the reaction 1-(5-phospho-beta-D-ribosyl)-5-[(5-phospho-beta-D-ribosylamino)methylideneamino]imidazole-4-carboxamide = 5-[(5-phospho-1-deoxy-D-ribulos-1-ylimino)methylamino]-1-(5-phospho-beta-D-ribosyl)imidazole-4-carboxamide. It functions in the pathway amino-acid biosynthesis; L-histidine biosynthesis; L-histidine from 5-phospho-alpha-D-ribose 1-diphosphate: step 4/9. The protein is 1-(5-phosphoribosyl)-5-[(5-phosphoribosylamino)methylideneamino] imidazole-4-carboxamide isomerase of Rhizorhabdus wittichii (strain DSM 6014 / CCUG 31198 / JCM 15750 / NBRC 105917 / EY 4224 / RW1) (Sphingomonas wittichii).